The following is a 300-amino-acid chain: Porphobilinogen deaminase (300 aa).

Cysteine 239 carries the S-(dipyrrolylmethanemethyl)cysteine modification.

The protein belongs to the HMBS family. Monomer. The cofactor is dipyrromethane.

The catalysed reaction is 4 porphobilinogen + H2O = hydroxymethylbilane + 4 NH4(+). Its pathway is porphyrin-containing compound metabolism; protoporphyrin-IX biosynthesis; coproporphyrinogen-III from 5-aminolevulinate: step 2/4. Tetrapolymerization of the monopyrrole PBG into the hydroxymethylbilane pre-uroporphyrinogen in several discrete steps. The chain is Porphobilinogen deaminase from Francisella tularensis subsp. holarctica (strain FTNF002-00 / FTA).